The sequence spans 843 residues: Protein P (843 aa).

The segment at 1-177 (MPLSYQHFRK…FCGSPYSWEQ (177 aa)) is terminal protein domain (TP). Residues 178–346 (ELQHGRLVLQ…HCLFHIVNLI (169 aa)) are spacer. Disordered regions lie at residues 221 to 240 (SRLG…QGGS) and 289 to 315 (VSTS…SRSQ). Residues 223–235 (LGPQPTQGQLAGL) are compositionally biased toward low complexity. The interval 347–690 (DDWGPCAEHG…YLNLYPVARQ (344 aa)) is polymerase/reverse transcriptase domain (RT). A Reverse transcriptase domain is found at 357-600 (EHRIRTPRTP…YSLNFMGYVI (244 aa)). Mg(2+) contacts are provided by Asp-429, Asp-551, and Asp-552.

It belongs to the hepadnaviridae P protein family.

The enzyme catalyses DNA(n) + a 2'-deoxyribonucleoside 5'-triphosphate = DNA(n+1) + diphosphate. It catalyses the reaction Endonucleolytic cleavage to 5'-phosphomonoester.. Its activity is regulated as follows. Activated by host HSP70 and HSP40 in vitro to be able to bind the epsilon loop of the pgRNA. Because deletion of the RNase H region renders the protein partly chaperone-independent, the chaperones may be needed indirectly to relieve occlusion of the RNA-binding site by this domain. Inhibited by several reverse-transcriptase inhibitors: Lamivudine, Adefovir and Entecavir. Multifunctional enzyme that converts the viral RNA genome into dsDNA in viral cytoplasmic capsids. This enzyme displays a DNA polymerase activity that can copy either DNA or RNA templates, and a ribonuclease H (RNase H) activity that cleaves the RNA strand of RNA-DNA heteroduplexes in a partially processive 3'- to 5'-endonucleasic mode. Neo-synthesized pregenomic RNA (pgRNA) are encapsidated together with the P protein, and reverse-transcribed inside the nucleocapsid. Initiation of reverse-transcription occurs first by binding the epsilon loop on the pgRNA genome, and is initiated by protein priming, thereby the 5'-end of (-)DNA is covalently linked to P protein. Partial (+)DNA is synthesized from the (-)DNA template and generates the relaxed circular DNA (RC-DNA) genome. After budding and infection, the RC-DNA migrates in the nucleus, and is converted into a plasmid-like covalently closed circular DNA (cccDNA). The activity of P protein does not seem to be necessary for cccDNA generation, and is presumably released from (+)DNA by host nuclear DNA repair machinery. This is Protein P from Homo sapiens (Human).